Reading from the N-terminus, the 583-residue chain is Aspartate--tRNA ligase (583 aa).

E169 provides a ligand contact to L-aspartate. The aspartate stretch occupies residues 193-196 (QLFK). An L-aspartate-binding site is contributed by R215. ATP contacts are provided by residues 215–217 (RDE) and Q224. H443 lines the L-aspartate pocket. E477 contacts ATP. R484 is a binding site for L-aspartate. 529-532 (GIDR) contributes to the ATP binding site.

This sequence belongs to the class-II aminoacyl-tRNA synthetase family. Type 1 subfamily. In terms of assembly, homodimer.

The protein resides in the cytoplasm. It catalyses the reaction tRNA(Asp) + L-aspartate + ATP = L-aspartyl-tRNA(Asp) + AMP + diphosphate. Its function is as follows. Catalyzes the attachment of L-aspartate to tRNA(Asp) in a two-step reaction: L-aspartate is first activated by ATP to form Asp-AMP and then transferred to the acceptor end of tRNA(Asp). The polypeptide is Aspartate--tRNA ligase (Stenotrophomonas maltophilia (strain R551-3)).